The following is a 241-amino-acid chain: uncharacterized protein (241 aa).

Belongs to the AB hydrolase superfamily. AB hydrolase 2 family.

This is an uncharacterized protein from Schizosaccharomyces pombe (strain 972 / ATCC 24843) (Fission yeast).